Here is a 111-residue protein sequence, read N- to C-terminus: T cell receptor alpha variable 18 (111 aa).

The N-terminal stretch at 1–20 is a signal peptide; it reads MLSASCSGLVILLIFRRTSG. The region spanning 21-111 is the Ig-like domain; that stretch reads DSVTQTEGPV…DSAVYYCALR (91 aa). Residue asparagine 41 is glycosylated (N-linked (GlcNAc...) asparagine). Cysteine 42 and cysteine 108 form a disulfide bridge.

In terms of assembly, alpha-beta TR is a heterodimer composed of an alpha and beta chain; disulfide-linked. The alpha-beta TR is associated with the transmembrane signaling CD3 coreceptor proteins to form the TR-CD3 (TcR or TCR). The assembly of alpha-beta TR heterodimers with CD3 occurs in the endoplasmic reticulum where a single alpha-beta TR heterodimer associates with one CD3D-CD3E heterodimer, one CD3G-CD3E heterodimer and one CD247 homodimer forming a stable octameric structure. CD3D-CD3E and CD3G-CD3E heterodimers preferentially associate with TR alpha and TR beta chains, respectively. The association of the CD247 homodimer is the last step of TcR assembly in the endoplasmic reticulum and is required for transport to the cell surface.

The protein localises to the cell membrane. V region of the variable domain of T cell receptor (TR) alpha chain that participates in the antigen recognition. Alpha-beta T cell receptors are antigen specific receptors which are essential to the immune response and are present on the cell surface of T lymphocytes. Recognize peptide-major histocompatibility (MH) (pMH) complexes that are displayed by antigen presenting cells (APC), a prerequisite for efficient T cell adaptive immunity against pathogens. Binding of alpha-beta TR to pMH complex initiates TR-CD3 clustering on the cell surface and intracellular activation of LCK that phosphorylates the ITAM motifs of CD3G, CD3D, CD3E and CD247 enabling the recruitment of ZAP70. In turn ZAP70 phosphorylates LAT, which recruits numerous signaling molecules to form the LAT signalosome. The LAT signalosome propagates signal branching to three major signaling pathways, the calcium, the mitogen-activated protein kinase (MAPK) kinase and the nuclear factor NF-kappa-B (NF-kB) pathways, leading to the mobilization of transcription factors that are critical for gene expression and essential for T cell growth and differentiation. The T cell repertoire is generated in the thymus, by V-(D)-J rearrangement. This repertoire is then shaped by intrathymic selection events to generate a peripheral T cell pool of self-MH restricted, non-autoaggressive T cells. Post-thymic interaction of alpha-beta TR with the pMH complexes shapes TR structural and functional avidity. The chain is T cell receptor alpha variable 18 from Homo sapiens (Human).